Consider the following 145-residue polypeptide: Methyl-coenzyme M reductase I operon protein D (145 aa).

In terms of assembly, MCR is composed of three subunits: alpha, beta, and gamma. The function of proteins C and D is not known.

The polypeptide is Methyl-coenzyme M reductase I operon protein D (mcrD) (Methanothermobacter marburgensis (strain ATCC BAA-927 / DSM 2133 / JCM 14651 / NBRC 100331 / OCM 82 / Marburg) (Methanobacterium thermoautotrophicum)).